We begin with the raw amino-acid sequence, 591 residues long: V-type ATP synthase alpha chain (591 aa).

231-238 (GPFGSGKT) contributes to the ATP binding site.

Belongs to the ATPase alpha/beta chains family.

The enzyme catalyses ATP + H2O + 4 H(+)(in) = ADP + phosphate + 5 H(+)(out). In terms of biological role, produces ATP from ADP in the presence of a proton gradient across the membrane. The V-type alpha chain is a catalytic subunit. This chain is V-type ATP synthase alpha chain, found in Clostridium novyi (strain NT).